Consider the following 457-residue polypeptide: Tubulin alpha chain (457 aa).

Positions 12, 77, 146, 150, 151, 186, 213, and 235 each coordinate GTP. Position 77 (Glu77) interacts with Mg(2+).

Belongs to the tubulin family. As to quaternary structure, dimer of alpha and beta chains. A typical microtubule is a hollow water-filled tube with an outer diameter of 25 nm and an inner diameter of 15 nM. Alpha-beta heterodimers associate head-to-tail to form protofilaments running lengthwise along the microtubule wall with the beta-tubulin subunit facing the microtubule plus end conferring a structural polarity. Microtubules usually have 13 protofilaments but different protofilament numbers can be found in some organisms and specialized cells. Requires Mg(2+) as cofactor. In terms of processing, undergoes a tyrosination/detyrosination cycle, the cyclic removal and re-addition of a C-terminal tyrosine residue by the enzymes tubulin tyrosine carboxypeptidase (TTCP) and tubulin tyrosine ligase (TTL), respectively.

Its subcellular location is the cytoplasm. The protein localises to the cytoskeleton. It catalyses the reaction GTP + H2O = GDP + phosphate + H(+). In terms of biological role, tubulin is the major constituent of microtubules, a cylinder consisting of laterally associated linear protofilaments composed of alpha- and beta-tubulin heterodimers. Microtubules grow by the addition of GTP-tubulin dimers to the microtubule end, where a stabilizing cap forms. Below the cap, tubulin dimers are in GDP-bound state, owing to GTPase activity of alpha-tubulin. This is Tubulin alpha chain (tubA) from Dictyostelium discoideum (Social amoeba).